The chain runs to 515 residues: MTTPSILTLHPGEMTFADLRRVWLAPTPVTLSGDCAAAIEASAATVQAIVARGEPAYGINTGFGKLARTQIATHELEHLQRNLILSHAVGTGQDLDDNVARLVLLMKAASLARGYSGVRRVVIDTLLAMLNAGIVPCIPSKGSVGASGDLAPLAHMTLAMLGEGDARVNGVRKPAREALAAAGIAPIALAAKEGLALINGTQVSTALALNGLFLAERLLQAATVAGALSVDAAKGSDAPFDPRVHTVRGQAGQIATAAVYRGLLAGSAIRRSHLVGDTRVQDPYSLRCQPQVMGACLDLIRQAGATLLTEANAVTDNPLVYADAGEVISGGNFHAEPVAFAADMLALAIAEIGALSERRIALLIDSTLSGLPPFLVEQPGLNSGFMIAHVTAAALASENKSLAHPASVDSLPTSANQEDHVSMATFAGRRLAEMAGNTATIVGIEALAAAQGIDFHRPLATSDALARAHTCIRSRVAYYGEDRLFAPDIEAARRLVLDGDLGDSCRAHLADLALA.

Residues 146–148 (ASG) constitute a cross-link (5-imidazolinone (Ala-Gly)). Residue Ser-147 is modified to 2,3-didehydroalanine (Ser).

The protein belongs to the PAL/histidase family. Post-translationally, contains an active site 4-methylidene-imidazol-5-one (MIO), which is formed autocatalytically by cyclization and dehydration of residues Ala-Ser-Gly.

It localises to the cytoplasm. It carries out the reaction L-histidine = trans-urocanate + NH4(+). Its pathway is amino-acid degradation; L-histidine degradation into L-glutamate; N-formimidoyl-L-glutamate from L-histidine: step 1/3. The sequence is that of Histidine ammonia-lyase (hutH) from Ralstonia nicotianae (strain ATCC BAA-1114 / GMI1000) (Ralstonia solanacearum).